Here is a 142-residue protein sequence, read N- to C-terminus: Coactosin-like protein (142 aa).

N-acetylalanine is present on Ala-2. Residues 2–130 enclose the ADF-H domain; sequence ATKIDKEACR…EEDFIRSELK (129 aa). The interval 66–75 is flexible and important for F-actin binding; it reads TGDAMSKRSK. Lys-102 is modified (N6-acetyllysine). Ser-141 carries the phosphoserine modification.

It belongs to the actin-binding proteins ADF family. Coactosin subfamily. Interacts with 5-lipoxygenase (ALOX5/5LO) in a calcium-independent manner. Binds to F-actin with a stoichiometry of 1:2.

It localises to the cytoplasm. The protein localises to the cytoskeleton. The protein resides in the nucleus. Its function is as follows. Binds to F-actin in a calcium-independent manner. Has no direct effect on actin depolymerization. Acts as a chaperone for ALOX5 (5LO), influencing both its stability and activity in leukotrienes synthesis. The polypeptide is Coactosin-like protein (Cotl1) (Mus musculus (Mouse)).